A 246-amino-acid polypeptide reads, in one-letter code: Protein YIPF4 (246 aa).

At 1 to 115 (MQPPGPPPAY…FNRQVVRDNP (115 aa)) the chain is on the cytoplasmic side. The helical transmembrane segment at 116–136 (DFWGPLAVVLFFSMISLYGQF) threads the bilayer. Residues 137–140 (RVVS) lie on the Lumenal side of the membrane. The chain crosses the membrane as a helical span at residues 141-161 (WIITIWIFGSLTIFLLARVLG). Over 162–168 (GEVAYGQ) the chain is Cytoplasmic. Residues 169 to 189 (VLGVIGYSLLPLIVIAPILLV) traverse the membrane as a helical segment. Residues 190–197 (VGSFEMVS) are Lumenal-facing. A helical membrane pass occupies residues 198–218 (TLIKLFGVFWAAYSAASLLVG). At 219–225 (EEFKTKK) the chain is on the cytoplasmic side. The helical transmembrane segment at 226 to 246 (PLLIYPIFLLYIYFLSLYTGV) threads the bilayer.

Belongs to the YIP1 family. As to quaternary structure, interacts with YIPF3 and YIPF5.

It localises to the golgi apparatus. Its subcellular location is the cis-Golgi network membrane. Involved in the maintenance of the Golgi structure. In Mus musculus (Mouse), this protein is Protein YIPF4 (Yipf4).